We begin with the raw amino-acid sequence, 286 residues long: Bifunctional protein FolD (286 aa).

Residues 165 to 167 (GRS), S190, and V231 each bind NADP(+).

It belongs to the tetrahydrofolate dehydrogenase/cyclohydrolase family. In terms of assembly, homodimer.

The catalysed reaction is (6R)-5,10-methylene-5,6,7,8-tetrahydrofolate + NADP(+) = (6R)-5,10-methenyltetrahydrofolate + NADPH. It catalyses the reaction (6R)-5,10-methenyltetrahydrofolate + H2O = (6R)-10-formyltetrahydrofolate + H(+). It participates in one-carbon metabolism; tetrahydrofolate interconversion. Functionally, catalyzes the oxidation of 5,10-methylenetetrahydrofolate to 5,10-methenyltetrahydrofolate and then the hydrolysis of 5,10-methenyltetrahydrofolate to 10-formyltetrahydrofolate. The protein is Bifunctional protein FolD of Bacillus cereus (strain ATCC 10987 / NRS 248).